We begin with the raw amino-acid sequence, 105 residues long: UPF0235 protein CT1832 (105 aa).

The protein belongs to the UPF0235 family.

The protein is UPF0235 protein CT1832 of Chlorobaculum tepidum (strain ATCC 49652 / DSM 12025 / NBRC 103806 / TLS) (Chlorobium tepidum).